Reading from the N-terminus, the 344-residue chain is uncharacterized protein (344 aa).

Residues 221–249 (IQAQSMDEQKQIQEIYQNVEKLKEDVTKN) adopt a coiled-coil conformation.

The protein belongs to the IIV-6 287R family.

This is an uncharacterized protein from Aedes vexans (Inland floodwater mosquito).